A 452-amino-acid chain; its full sequence is Cell division protein FtsZ (452 aa).

GTP is bound by residues G24–N28, G111–G113, E142, R146, and D190.

The protein belongs to the FtsZ family. In terms of assembly, homodimer. Polymerizes to form a dynamic ring structure in a strictly GTP-dependent manner. Interacts directly with several other division proteins.

It localises to the cytoplasm. Essential cell division protein that forms a contractile ring structure (Z ring) at the future cell division site. The regulation of the ring assembly controls the timing and the location of cell division. One of the functions of the FtsZ ring is to recruit other cell division proteins to the septum to produce a new cell wall between the dividing cells. Binds GTP and shows GTPase activity. The chain is Cell division protein FtsZ from Rickettsia typhi (strain ATCC VR-144 / Wilmington).